Here is a 180-residue protein sequence, read N- to C-terminus: Translation initiation factor IF-3 (180 aa).

Belongs to the IF-3 family. In terms of assembly, monomer.

It localises to the cytoplasm. IF-3 binds to the 30S ribosomal subunit and shifts the equilibrium between 70S ribosomes and their 50S and 30S subunits in favor of the free subunits, thus enhancing the availability of 30S subunits on which protein synthesis initiation begins. This Hyphomonas neptunium (strain ATCC 15444) protein is Translation initiation factor IF-3.